We begin with the raw amino-acid sequence, 339 residues long: Ketol-acid reductoisomerase (NADP(+)) (339 aa).

The KARI N-terminal Rossmann domain maps to 1 to 182 (MRVYYDCDVN…GGGRSGIMKT (182 aa)). Residues 24–27 (YGAQ), Ser51, Thr53, and 83–86 (DELQ) each bind NADP(+). His108 is an active-site residue. Residue Gly134 participates in NADP(+) binding. The KARI C-terminal knotted domain maps to 183–328 (TFREECETDL…DKIRSMMALT (146 aa)). Mg(2+)-binding residues include Asp191, Glu195, Glu227, and Glu231. Ser252 contributes to the substrate binding site.

This sequence belongs to the ketol-acid reductoisomerase family. Requires Mg(2+) as cofactor.

It carries out the reaction (2R)-2,3-dihydroxy-3-methylbutanoate + NADP(+) = (2S)-2-acetolactate + NADPH + H(+). It catalyses the reaction (2R,3R)-2,3-dihydroxy-3-methylpentanoate + NADP(+) = (S)-2-ethyl-2-hydroxy-3-oxobutanoate + NADPH + H(+). It functions in the pathway amino-acid biosynthesis; L-isoleucine biosynthesis; L-isoleucine from 2-oxobutanoate: step 2/4. Its pathway is amino-acid biosynthesis; L-valine biosynthesis; L-valine from pyruvate: step 2/4. In terms of biological role, involved in the biosynthesis of branched-chain amino acids (BCAA). Catalyzes an alkyl-migration followed by a ketol-acid reduction of (S)-2-acetolactate (S2AL) to yield (R)-2,3-dihydroxy-isovalerate. In the isomerase reaction, S2AL is rearranged via a Mg-dependent methyl migration to produce 3-hydroxy-3-methyl-2-ketobutyrate (HMKB). In the reductase reaction, this 2-ketoacid undergoes a metal-dependent reduction by NADPH to yield (R)-2,3-dihydroxy-isovalerate. In Bartonella bacilliformis (strain ATCC 35685 / KC583 / Herrer 020/F12,63), this protein is Ketol-acid reductoisomerase (NADP(+)).